The following is a 168-amino-acid chain: Calcium-binding protein 2 (168 aa).

4 consecutive EF-hand domains span residues 13–48 (GMEK…AGKK), 48–83 (KNPE…MNDE), 88–123 (VLNW…QGAE), and 124–159 (DPEL…KKFS). Ca(2+) is bound by residues D26, D28, N30, K32, E37, D61, D63, N65, E67, E72, D101, D103, D105, K107, E112, D137, D139, D141, and E148.

Functionally, not known; probably binds four calcium ions. In Dictyostelium discoideum (Social amoeba), this protein is Calcium-binding protein 2 (cbp2).